A 142-amino-acid chain; its full sequence is uncharacterized protein (142 aa).

In terms of domain architecture, N-acetyltransferase spans 2 to 142; that stretch reads IHMKQLTSKE…IESYLFRKPV (141 aa).

This sequence belongs to the acetyltransferase family.

This is an uncharacterized protein from Bacillus subtilis (strain 168).